The following is a 395-amino-acid chain: Methylmalonyl-CoA decarboxylase subunit beta (395 aa).

A run of 9 helical transmembrane segments spans residues Leu-17–Ala-37, Leu-43–Met-63, Gly-103–Ile-123, Ser-128–Ala-148, Pro-180–Ile-200, Ile-230–Leu-250, Ile-278–Phe-298, Leu-304–Leu-324, and Gly-374–Phe-394.

This sequence belongs to the GcdB/MmdB/OadB family. In terms of assembly, the methylmalonyl-CoA decarboxylase is composed of four subunits: the carboxyltransferase alpha subunit (MmdA), the tunnel beta subunit (MmdB), the biotin-containing gamma subunit (MmdC) and the delta subunit (MmdD). The N-terminus is blocked.

It is found in the cell membrane. The catalysed reaction is (S)-methylmalonyl-CoA + Na(+)(in) + H(+)(out) = propanoyl-CoA + Na(+)(out) + CO2. In terms of biological role, tunnel subunit of the sodium ion pump methylmalonyl-CoA decarboxylase, which converts the chemical energy of a decarboxylation reaction into an electrochemical gradient of Na(+) ions across the cytoplasmic membrane, thereby creating a sodium ion motive force that is used for ATP synthesis. The beta subunit catalyzes the decarboxylation of the carboxybiotin carrier protein and the coupled export of Na(+) ions. The polypeptide is Methylmalonyl-CoA decarboxylase subunit beta (Propionigenium modestum).